The sequence spans 67 residues: Large ribosomal subunit protein uL29 (67 aa).

Belongs to the universal ribosomal protein uL29 family.

This chain is Large ribosomal subunit protein uL29, found in Clostridioides difficile (strain 630) (Peptoclostridium difficile).